The primary structure comprises 369 residues: MSIAEPILLTPGPLTTSARTRQAMLVDWGSWDDRFNQLTASLCQQLLAIIQGADSHHCVPLQGSGTFAVEAAIGTLVPRDGKVLVLINGAYGKRLAKICEVLGRDFSTFETAEDQPTTAADVERLLQADSSISHVALIHCETSTGILNPLPEIAQVVASHGKRLIIDAMSSFGALPIDAREIPFDALIAASGKCLEGVPGMGFVFAAKASLAQAGGNAHSLAMDLHDQHSYMAKTGQWRFTPPTHVVAALHEALLQYAEEGGLPARHARYADNCQTLLDGMGELGLRSFLPEAIQAPIIVTFHAPKDPRYQFKDFYERVKAKGFILYPGKLTQVETFRVGCIGHVDRRGMQAAVAAIAEVLQEMEVLDI.

The residue at position 193 (Lys193) is an N6-(pyridoxal phosphate)lysine.

The protein belongs to the class-V pyridoxal-phosphate-dependent aminotransferase family. PhnW subfamily. Homodimer. It depends on pyridoxal 5'-phosphate as a cofactor.

The catalysed reaction is (2-aminoethyl)phosphonate + pyruvate = phosphonoacetaldehyde + L-alanine. In terms of biological role, involved in phosphonate degradation. This Pseudomonas fluorescens (strain ATCC BAA-477 / NRRL B-23932 / Pf-5) protein is 2-aminoethylphosphonate--pyruvate transaminase.